We begin with the raw amino-acid sequence, 60 residues long: Single-pass membrane and coiled-coil domain-containing protein 4 homolog (60 aa).

The segment at 1–21 (MRKLRGGQTKETRKQKQERRE) is disordered. Residues 8–21 (QTKETRKQKQERRE) are compositionally biased toward basic and acidic residues. Residues 10–33 (KETRKQKQERREENLKIQQQLKTI) adopt a coiled-coil conformation. The chain crosses the membrane as a helical span at residues 32–52 (TIVLPICGVFLMCIVVYVFLK).

This sequence belongs to the SMCO4 family.

The protein localises to the membrane. This is Single-pass membrane and coiled-coil domain-containing protein 4 homolog from Aedes aegypti (Yellowfever mosquito).